A 708-amino-acid chain; its full sequence is F-box only protein 43 (708 aa).

The disordered stretch occupies residues 35–55; that stretch reads MSQRHSGQAGTEAGNGADSPP. Phosphoserine is present on Ser-76. Phosphothreonine is present on Thr-234. A disordered region spans residues 320 to 426; the sequence is PSPEVRGSIS…ISEGQLSSDE (107 aa). The span at 327 to 337 shows a compositional bias: polar residues; sequence SISTPEDSGFN. At Ser-334 the chain carries Phosphoserine. Positions 374 to 385 are enriched in basic residues; that stretch reads KTRHLGRSRRLS. Basic and acidic residues predominate over residues 399 to 411; the sequence is EKQIVHPDSEKRA. The region spanning 490-547 is the F-box domain; sequence MGIEKLDILTELKYRNLKHILAMVLESLTAESLCSVWKVSRNWREIVVQDKNANRRRK. The ZBR-type zinc-finger motif lies at 636-684; it reads ALKPCPRCQSPAKYQPYKKRGLCSRTACGFDFCVLCLCAYHGSEECSRG. Positions 640, 643, 658, 663, 668, 671, 676, and 681 each coordinate Zn(2+). The disordered stretch occupies residues 682–708; it reads SRGAAKPRNRKDALPGSAQSKRNLKRL.

As to quaternary structure, part of a SCF (SKP1-cullin-F-box) protein ligase complex. According to PubMed:34595750 interaction with SKP1 does not occur. Interacts with ANAPC2; the interaction is direct, ANAPC4, CDC16, CDC23; the interaction is direct, ANAPC10; the interaction is direct and CDC26, during spermatogenesis. May interact with CDC20. Post-translationally, phosphorylated on Ser-76, Thr-234 and Ser-334 in response to calcium, which is a prerequisite for ubiquitination and proteasomal degradation. Ubiquitinated in response to calcium, which promotes proteasomal degradation. As to expression, expressed in the testis.

It functions in the pathway protein modification; protein ubiquitination. Required to establish and maintain the arrest of oocytes at the second meiotic metaphase until fertilization. Acts by inhibiting the anaphase-promoting complex/cyclosome (APC/C) ubiquitin ligase. Probably recognizes and binds to some phosphorylated proteins and promotes their ubiquitination and degradation. Plays a vital role in modulating the ubiquitilation of CCNB1 and CDK1 during gametogenesis. The sequence is that of F-box only protein 43 (FBXO43) from Homo sapiens (Human).